The primary structure comprises 205 residues: Holliday junction branch migration complex subunit RuvA (205 aa).

A domain I region spans residues 1 to 64 (MIGRLRGLLV…EDAQLLYGFI (64 aa)). Residues 65-143 (TKQERALFRL…SLMEASHGNE (79 aa)) form a domain II region. The tract at residues 144-156 (REFVLQSNYTPAP) is flexible linker. Residues 157–205 (VVNTAEEDAISALLALGYKPAQASKAVSSVFEEGMDSETLIKASLKSML) form a domain III region.

The protein belongs to the RuvA family. As to quaternary structure, homotetramer. Forms an RuvA(8)-RuvB(12)-Holliday junction (HJ) complex. HJ DNA is sandwiched between 2 RuvA tetramers; dsDNA enters through RuvA and exits via RuvB. An RuvB hexamer assembles on each DNA strand where it exits the tetramer. Each RuvB hexamer is contacted by two RuvA subunits (via domain III) on 2 adjacent RuvB subunits; this complex drives branch migration. In the full resolvosome a probable DNA-RuvA(4)-RuvB(12)-RuvC(2) complex forms which resolves the HJ.

Its subcellular location is the cytoplasm. In terms of biological role, the RuvA-RuvB-RuvC complex processes Holliday junction (HJ) DNA during genetic recombination and DNA repair, while the RuvA-RuvB complex plays an important role in the rescue of blocked DNA replication forks via replication fork reversal (RFR). RuvA specifically binds to HJ cruciform DNA, conferring on it an open structure. The RuvB hexamer acts as an ATP-dependent pump, pulling dsDNA into and through the RuvAB complex. HJ branch migration allows RuvC to scan DNA until it finds its consensus sequence, where it cleaves and resolves the cruciform DNA. The polypeptide is Holliday junction branch migration complex subunit RuvA (Shewanella loihica (strain ATCC BAA-1088 / PV-4)).